A 285-amino-acid chain; its full sequence is Methanethiol S-methyltransferase 1 (285 aa).

5 helical membrane-spanning segments follow: residues 55–75 (AYLV…GLVV), 88–108 (AEAV…HSVM), 132–152 (LFAS…PTVI), 162–182 (VTLV…TFII), and 224–244 (FIVA…FAAV).

Belongs to the nurim family.

Its subcellular location is the membrane. The enzyme catalyses methanethiol + S-adenosyl-L-methionine = dimethyl sulfide + S-adenosyl-L-homocysteine + H(+). Catalyzes the methylation of methanethiol (MeSH) to yield dimethylsulphide (DMS). This is Methanethiol S-methyltransferase 1 from Bradyrhizobium diazoefficiens (strain JCM 10833 / BCRC 13528 / IAM 13628 / NBRC 14792 / USDA 110).